The sequence spans 934 residues: Rab GTPase-activating protein tbc-11 (934 aa).

The 119-residue stretch at 16–134 (VQYLGCSQLV…SKAETAAKAL (119 aa)) folds into the PID domain. Residues 337–383 (FISLESDSDRKRSKQNLGKSPSRMPTQLLHPTGDDESDCDEPLLSGS) form a disordered region. The span at 351–361 (QNLGKSPSRMP) shows a compositional bias: polar residues. Positions 422–612 (GIPDKLRGRV…FILDLFLSQG (191 aa)) constitute a Rab-GAP TBC domain. 2 coiled-coil regions span residues 727-800 (KIEL…YKKL) and 861-895 (LEEREDHIKNLEIDLAQTKLSLVEAECRNQDLTHQ).

Rab GTPase activating protein for the small GTPases rab-6.1 and rab-6.2. Probably acts through rab-6.1 and rab-6.2 to play a role in microRNA-mediated gene silencing in different tissue types. Required for seam cell division and alae formation. The sequence is that of Rab GTPase-activating protein tbc-11 from Caenorhabditis elegans.